The primary structure comprises 1041 residues: MSWLRQGSSGGVASAGHSGNIRQRPIDAATDCDPRACYDSFCKHWQQAHEIIQHSAPPSHDDVLGVVSHLDYMVTLLLVELHHCNKVALPTTEASGPPAAPCLEYLLSENLLDKLYEWSCATGRYANAVRLEQLKLYELLVSHSRHQLLCHEPFLRPLLKILASSQGEIFPPDLEKRLVILLNQLCVVLMQNVHLLDLFFFSAQTQVQEQIQNGSVPPPKSGTTTNFIIFSLLIPYVHREGSLGHQARDALLLCMALSQKNSNIGTYIAQYSSICPLLVTGLGGLYSRLPNSIEISAIDWHRITPDDVTEIPELTLFMNALEFCNAVVQVAHEMIKQQLLDFMYQGFIVPVLGPAILQTLKGKHFQTNIDSQISAMSYLDLILRSITEPGLLRAFVRFLLDNEKFDGERILDALVERLNSPDANLCMVTLALFDTLLGLHCEDLMLELLLKFMLPGKHVPLSHRHKINKIDPYLSSSEFFLELSPDVMKRARDLAKPKAIQEHPVVGDIPSPVMSKTIGANWNYYGVHTGDSLYANIQAYLFEAHWRIAQCQKDCLKWANSYRYQKWPRHGQGRVQAHALDLARQFFSEYGGSGPVVASGETGEKQLDSLQSIGESSGYESFKWRPADEESEATETTLATTASEVELEHNSSSISSGLAASGRREPWRISHNNRNELVLTDLDFSEDLFAQGTVSLGPFLNAIWGKLQTFTSNSLYVNLHLTGLITRLAWYPLPLIHSLLLRSDIVITSDTPSFHQVLRILKQQIDAELPVTEDSLEIIDVARSSLIDREFRLVNTRKGNEGSPSHHNLQQQQALNPAQQQGQQRSAYATLSAATPVQATPTSAYDPFRRSDNKRRSISKSITSMFSRKSAPTAAASAAPANGSSASSGLSQIYAFFTGAASTLVGSNSSSESRGFAPGQQSAGTCETSLSTQPPRPTTIASGSSSNSSMGGSSQTLSAHSNATTTHSSSTLHGLDGGPPSFSSEPVSLDSVASMGIIASTSGTERSRDLALCAVLLDEWLKELAAIAQEQSVVLVTEQTL.

2 disordered regions span residues R797 to R856 and S907 to V987. Phosphoserine is present on S803. The segment covering N808–Q824 has biased composition (low complexity). Polar residues-rich tracts occupy residues R825–S843 and S907–Q933. Positions S942–H973 are enriched in low complexity.

It belongs to the FHIP family.

The protein is FHIP family protein GF15501 of Drosophila ananassae (Fruit fly).